Here is a 367-residue protein sequence, read N- to C-terminus: MNIKGKALLAGCIALAFSNMALAEDIKVAVVGAMSGPVAQYGDQEFTGAEQAVADINAKGGIKGNKLQIVKYDDACDPKQAVAVANKVVNDGIKYVIGHLCSSSTQPASDIYEDEGILMITPAATAPELTARGYQLILRTTGLDSDQGPTAAKYILEKVKPQRIAIVHDKQQYGEGLARAVQDGLKKGNANVVFFDGITAGEKDFSTLVARLKKENIDFVYYGGYHPEMGQILRQARAAGLKTQFMGPEGVANVSLSNIAGESAEGLLVTKPKNYDQVPANKPIVDAIKAKKQDPSGAFVWTTYAALQSLQAGLNQSDDPAEIAKYLKANSVDTVMGPLTWDEKGDLKGFEFGVFDWHANGTATDAK.

A signal peptide spans 1-23 (MNIKGKALLAGCIALAFSNMALA). Cys-76 and Cys-101 form a disulfide bridge.

Belongs to the leucine-binding protein family.

Its subcellular location is the periplasm. This protein is a component of the leucine, isoleucine, valine, (threonine) transport system, which is one of the two periplasmic binding protein-dependent transport systems of the high-affinity transport of the branched-chain amino acids. The chain is Leu/Ile/Val-binding protein (livJ) from Escherichia coli O157:H7.